The following is a 967-amino-acid chain: E3 ubiquitin-protein ligase arkadia-C (967 aa).

Disordered regions lie at residues 57–175 (QQID…VSSL) and 193–276 (RKRF…SGGM). A compositionally biased stretch (low complexity) spans 112–131 (SSFSDCISSPSSSSHFGDSD). Over residues 149-160 (GINSTPRTQSAR) the composition is skewed to polar residues. The segment covering 232–251 (SSSSSSENDLSSESSSSSST) has biased composition (low complexity). The SUMO interaction motif 1 (SIM) signature appears at 280–284 (VVVIE). The SUMO interaction motif 2 (SIM) motif lies at 305–311 (EVEIVTV). The interval 321 to 343 (LGHPRSHWGQNSQSGRTQEHRTR) is disordered. An SUMO interaction motif 3 (SIM) motif is present at residues 360–364 (VVDLT). Disordered stretches follow at residues 368–452 (DDPT…MPRL), 482–548 (HSHH…LSNN), 629–657 (LHHQTSACPHSNPASQPPPPPPPPPMDYV), and 669–689 (PSLTSTHAVPPPPPSHHLSTA). A compositionally biased stretch (low complexity) spans 385-395 (VSTVSSNTSTS). Positions 482 to 498 (HSHHFPHHHHHHHHHSS) are enriched in basic residues. The segment covering 629-642 (LHHQTSACPHSNPA) has biased composition (polar residues). Over residues 643 to 654 (SQPPPPPPPPPM) the composition is skewed to pro residues. Residues 880 to 882 (YPH) form a ubiquitin binding region. Zn(2+) contacts are provided by Cys-915 and Cys-918. The RING-type; atypical zinc finger occupies 915–956 (CTICLSILEEGEDVRRLPCMHLFHQVCVDQWLITNKKCPICR). The segment at 930–934 (RLPCM) is ubiquitin binding. Zn(2+) contacts are provided by His-938 and Cys-941.

It belongs to the Arkadia family. As to quaternary structure, monomer.

It localises to the nucleus. The protein resides in the cytoplasm. The protein localises to the PML body. It carries out the reaction S-ubiquitinyl-[E2 ubiquitin-conjugating enzyme]-L-cysteine + [acceptor protein]-L-lysine = [E2 ubiquitin-conjugating enzyme]-L-cysteine + N(6)-ubiquitinyl-[acceptor protein]-L-lysine.. It functions in the pathway protein modification; protein ubiquitination. With respect to regulation, binds free ubiquitin non-covalently via its RING-type zinc finger. Ubiquitin-binding leads to enhance the E3 ubiquitin-protein ligase activity by stabilizing the ubiquitin-conjugating enzyme E2 (donor ubiquitin) in the 'closed' conformation and activating ubiquitin transfer. In terms of biological role, E3 ubiquitin-protein ligase required for mesoderm patterning during embryonic development. Acts as an enhancer of the transcriptional responses of the smad2/smad3 effectors, which are activated downstream of BMP. Acts by mediating ubiquitination and degradation of SMAD inhibitors such as smad7, inducing their proteasomal degradation and thereby enhancing the transcriptional activity of TGF-beta and BMP. Specifically binds polysumoylated chains via SUMO interaction motifs (SIMs) and mediates ubiquitination of sumoylated substrates. The regulation of the BMP-SMAD signaling is however independent of sumoylation and is not dependent of SUMO interaction motifs (SIMs). The sequence is that of E3 ubiquitin-protein ligase arkadia-C (rnf111-c) from Xenopus laevis (African clawed frog).